A 298-amino-acid polypeptide reads, in one-letter code: Acetylglutamate kinase (298 aa).

Substrate is bound by residues 69–70 (GG), arginine 91, and asparagine 196.

It belongs to the acetylglutamate kinase family. ArgB subfamily.

The protein localises to the cytoplasm. The catalysed reaction is N-acetyl-L-glutamate + ATP = N-acetyl-L-glutamyl 5-phosphate + ADP. It functions in the pathway amino-acid biosynthesis; L-arginine biosynthesis; N(2)-acetyl-L-ornithine from L-glutamate: step 2/4. In terms of biological role, catalyzes the ATP-dependent phosphorylation of N-acetyl-L-glutamate. The protein is Acetylglutamate kinase of Rhodopseudomonas palustris (strain BisA53).